A 421-amino-acid polypeptide reads, in one-letter code: Forkhead box protein J1 (421 aa).

Disordered regions lie at residues 1–32 (MAES…LDDS) and 77–110 (ADPA…PPPD). Residues 11-21 (AGPGEEAGPEG) are compositionally biased toward gly residues. Polar residues predominate over residues 90–99 (KPTSSCTSRS). Residues 120-210 (VKPPYSYATL…YAERLLSGAF (91 aa)) constitute a DNA-binding region (fork-head).

This sequence belongs to the FOXJ1 family. Predominantly expressed in tissues containing motile cilia.

The protein localises to the nucleus. In terms of biological role, transcription factor specifically required for the formation of motile cilia. Acts by activating transcription of genes that mediate assembly of motile cilia, such as CFAP157. Binds the DNA consensus sequences 5'-HWDTGTTTGTTTA-3' or 5'-KTTTGTTGTTKTW-3' (where H is not G, W is A or T, D is not C, and K is G or T). Activates the transcription of a variety of ciliary proteins in the developing brain and lung. In Mus musculus (Mouse), this protein is Forkhead box protein J1.